Consider the following 317-residue polypeptide: Nucleosome assembly protein 1;4 (317 aa).

Positions 52–67 (LSPKVTKRVLFLKDIQ) match the Nuclear export signal motif. A Nuclear localization signal motif is present at residues 214–219 (KKKTKK). Residues 297-317 (ALVDEDDSDDNDDDDNDEKSD) are disordered. A compositionally biased stretch (acidic residues) spans 298–317 (LVDEDDSDDNDDDDNDEKSD).

This sequence belongs to the nucleosome assembly protein (NAP) family. Can form homomeric and heteromeric protein complexes with NAP1;1, NAP1;2 and NAP1;3. Binds histone H2A. In terms of tissue distribution, expressed in the root segment covering the apical end of the differentiation zone, the elongation zone of the root and the mature pollen within the anthers of open flowers.

The protein localises to the nucleus. The protein resides in the cytoplasm. In terms of biological role, may modulate chromatin structure by regulation of nucleosome assembly/disassembly. This is Nucleosome assembly protein 1;4 (NAP1;4) from Arabidopsis thaliana (Mouse-ear cress).